Reading from the N-terminus, the 294-residue chain is 33 kDa chaperonin (294 aa).

2 disulfides stabilise this stretch: C239-C241 and C272-C275.

This sequence belongs to the HSP33 family. In terms of processing, under oxidizing conditions two disulfide bonds are formed involving the reactive cysteines. Under reducing conditions zinc is bound to the reactive cysteines and the protein is inactive.

It localises to the cytoplasm. Functionally, redox regulated molecular chaperone. Protects both thermally unfolding and oxidatively damaged proteins from irreversible aggregation. Plays an important role in the bacterial defense system toward oxidative stress. In Listeria monocytogenes serovar 1/2a (strain ATCC BAA-679 / EGD-e), this protein is 33 kDa chaperonin.